Here is a 46-residue protein sequence, read N- to C-terminus: Antimicrobial peptide eNAP-1 (46 aa).

2 disulfides stabilise this stretch: Cys-4–Cys-16 and Cys-10–Cys-26.

The protein belongs to the granulin family.

It is found in the secreted. Its function is as follows. Has antimicrobial activity against Gram-negative and Gram-positive bacteria. This Equus caballus (Horse) protein is Antimicrobial peptide eNAP-1.